The sequence spans 506 residues: Xaa-Pro aminopeptidase 3 (506 aa).

Residues 1–31 constitute a mitochondrion transit peptide; that stretch reads MPSLLSTPKLAPVLARLRGLSGCMSCLQRRY. An interaction with TNFRSF1B region spans residues 54–79; sequence HPHLLRPGEVTPGLSQVEYALRRHKL. Tyr-300, Asp-331, Asp-342, His-423, His-430, Glu-450, and Glu-474 together coordinate substrate. Mn(2+) contacts are provided by Asp-331, Asp-342, and His-423. The Mn(2+) site is built by Glu-450 and Glu-474.

It belongs to the peptidase M24B family. In terms of assembly, homodimer. Interacts with TNFRSF1B/TNFR2 (activated) and TRAF2. Requires Mn(2+) as cofactor. In terms of tissue distribution, expressed in brain, kidney, heart, liver, skeletal muscle and testis.

It is found in the mitochondrion. Its subcellular location is the cytoplasm. The catalysed reaction is Release of any N-terminal amino acid, including proline, that is linked to proline, even from a dipeptide or tripeptide.. Catalyzes the removal of a penultimate prolyl residue from the N-termini of peptides, such as Leu-Pro-Ala. Also shows low activity towards peptides with Ala or Ser at the P1 position. Promotes TNFRSF1B-mediated phosphorylation of MAPK8/JNK1 and MAPK9/JNK2, suggesting a function as an adapter protein for TNFRSF1B; the effect is independent of XPNPEP3 peptidase activity. May inhibit apoptotic cell death induced via TNF-TNFRSF1B signaling. The sequence is that of Xaa-Pro aminopeptidase 3 (Xpnpep3) from Mus musculus (Mouse).